A 20-amino-acid chain; its full sequence is Magnificalysin I (20 aa).

The tract at residues 1–10 (ALAGTIIAGA) is plays an important role in the hemolytic activity. Residues 9–20 (GASLTFKILDEV) form an N-terminal region region.

The protein belongs to the actinoporin family. Sea anemone subfamily. Octamer or nonamer in membranes. Monomer in the soluble state.

Its subcellular location is the secreted. The protein localises to the nematocyst. It is found in the target cell membrane. Its function is as follows. Pore-forming protein that forms cations-selective hydrophilic pores of around 1 nm and causes cytolysis. Pore formation is a multi-step process that involves specific recognition of membrane sphingomyelin (but neither cholesterol nor phosphatidylcholine) using aromatic rich region and adjacent phosphocholine (POC) binding site, firm binding to the membrane (mainly driven by hydrophobic interactions) accompanied by the transfer of the N-terminal region to the lipid-water interface and finally pore formation after oligomerization of monomers. The polypeptide is Magnificalysin I (Heteractis magnifica (Magnificent sea anemone)).